The chain runs to 185 residues: Ribosome-recycling factor (185 aa).

It belongs to the RRF family.

The protein localises to the cytoplasm. In terms of biological role, responsible for the release of ribosomes from messenger RNA at the termination of protein biosynthesis. May increase the efficiency of translation by recycling ribosomes from one round of translation to another. This Streptococcus mutans serotype c (strain ATCC 700610 / UA159) protein is Ribosome-recycling factor.